Reading from the N-terminus, the 500-residue chain is Na(+)/H(+) antiporter NhaB (500 aa).

Transmembrane regions (helical) follow at residues 28–50 (FLLS…VLVG), 68–88 (GGLL…ALYA), 98–118 (LLLM…LLLF), 121–141 (LLLG…LAAL), 145–165 (FLDA…FFAV), 205–225 (LLMH…VGEP), 244–264 (QVAP…VALE), 301–318 (ALLV…GLAL), 350–370 (FQEA…VAVI), 394–414 (MLFI…VATI), 449–469 (VATP…IAPL), and 477–497 (MVWM…WAVS).

Belongs to the NhaB Na(+)/H(+) (TC 2.A.34) antiporter family.

Its subcellular location is the cell inner membrane. The enzyme catalyses 2 Na(+)(in) + 3 H(+)(out) = 2 Na(+)(out) + 3 H(+)(in). In terms of biological role, na(+)/H(+) antiporter that extrudes sodium in exchange for external protons. The sequence is that of Na(+)/H(+) antiporter NhaB from Pseudomonas paraeruginosa (strain DSM 24068 / PA7) (Pseudomonas aeruginosa (strain PA7)).